The chain runs to 370 residues: StAR-related lipid transfer protein 7, mitochondrial (370 aa).

The transit peptide at M1–L58 directs the protein to the mitochondrion. Positions D86–M111 form a coiled coil. Disordered regions lie at residues M111–E138 and M343–A370. In terms of domain architecture, START spans F112–N327.

Proteolytically cleaved by PARL. Expressed in nasal epithelial cells. Down-regulated in nasal epithelial cells in patients experiencing an asthma exacerbation as compared to stable asthmatics and healthy controls.

Its subcellular location is the mitochondrion. Its function is as follows. May play a protective role in mucosal tissues by preventing exaggerated allergic responses. The chain is StAR-related lipid transfer protein 7, mitochondrial (STARD7) from Homo sapiens (Human).